We begin with the raw amino-acid sequence, 100 residues long: Large ribosomal subunit protein uL23 (100 aa).

It belongs to the universal ribosomal protein uL23 family. In terms of assembly, part of the 50S ribosomal subunit. Contacts protein L29, and trigger factor when it is bound to the ribosome.

In terms of biological role, one of the early assembly proteins it binds 23S rRNA. One of the proteins that surrounds the polypeptide exit tunnel on the outside of the ribosome. Forms the main docking site for trigger factor binding to the ribosome. The polypeptide is Large ribosomal subunit protein uL23 (Yersinia pestis bv. Antiqua (strain Antiqua)).